We begin with the raw amino-acid sequence, 468 residues long: WD repeat-containing protein 55 homolog (468 aa).

The interval 1–107 (MRNFNSPKFG…VPKRVIDDYD (107 aa)) is disordered. 3 stretches are compositionally biased toward acidic residues: residues 15–26 (DDSDDDDFDSGT), 41–58 (PITE…EYNP), and 67–91 (SDDE…DGED). WD repeat units lie at residues 134–173 (KTED…CTIV), 178–217 (THTK…LKRF), 221–259 (AHEE…PVFK), 262–301 (EVED…MYVQ), 304–343 (PYEE…YHCD), and 388–427 (QHSL…EFDD).

This sequence belongs to the WD repeat WDR55 family.

The polypeptide is WD repeat-containing protein 55 homolog (Aedes aegypti (Yellowfever mosquito)).